A 66-amino-acid chain; its full sequence is Beta-defensin 134 (66 aa).

Residues 1–19 (MKPLLVVFVFLFLWDPVLA) form the signal peptide. 3 disulfides stabilise this stretch: C32-C58, C38-C52, and C42-C59.

Belongs to the beta-defensin family.

The protein localises to the secreted. Its function is as follows. Has antibacterial activity. In Homo sapiens (Human), this protein is Beta-defensin 134 (DEFB134).